The primary structure comprises 140 residues: Nucleoside diphosphate kinase (140 aa).

K11, F59, R87, T93, R104, and N114 together coordinate ATP. The Pros-phosphohistidine intermediate role is filled by H117.

Belongs to the NDK family. Homotetramer. Requires Mg(2+) as cofactor.

The protein resides in the cytoplasm. The catalysed reaction is a 2'-deoxyribonucleoside 5'-diphosphate + ATP = a 2'-deoxyribonucleoside 5'-triphosphate + ADP. The enzyme catalyses a ribonucleoside 5'-diphosphate + ATP = a ribonucleoside 5'-triphosphate + ADP. Functionally, major role in the synthesis of nucleoside triphosphates other than ATP. The ATP gamma phosphate is transferred to the NDP beta phosphate via a ping-pong mechanism, using a phosphorylated active-site intermediate. This is Nucleoside diphosphate kinase from Cereibacter sphaeroides (strain ATCC 17025 / ATH 2.4.3) (Rhodobacter sphaeroides).